The chain runs to 335 residues: Beta-1,4-mannooligosaccharide phosphorylase (335 aa).

The protein belongs to the glycosyl hydrolase 130 family. As to quaternary structure, homohexamer in solution.

It carries out the reaction [(1-&gt;4)-beta-D-mannosyl](n) + phosphate = [(1-&gt;4)-beta-D-mannosyl](n-1) + alpha-D-mannose 1-phosphate. Functionally, catalyzes the phosphorolysis of beta-1,4-mannooligosaccharides to mannose 1-phosphate (Man1P) and shorter mannooligosaccharides. Can also catalyze the phosphorolysis of 4-O-beta-D-mannopyranosyl-D-glucopyranose (Man-Glc), but shows higher activity toward longer mannooligosaccharides. Involved in a mannan catabolic pathway which feeds into glycolysis. The sequence is that of Beta-1,4-mannooligosaccharide phosphorylase from Ruminococcus albus (strain ATCC 27210 / DSM 20455 / JCM 14654 / NCDO 2250 / 7).